Here is an 825-residue protein sequence, read N- to C-terminus: Probable phosphoketolase (825 aa).

This sequence belongs to the XFP family. Thiamine diphosphate is required as a cofactor.

The polypeptide is Probable phosphoketolase (Bifidobacterium animalis subsp. lactis (strain AD011)).